The chain runs to 100 residues: Aspartyl/glutamyl-tRNA(Asn/Gln) amidotransferase subunit C (100 aa).

Belongs to the GatC family. Heterotrimer of A, B and C subunits.

It catalyses the reaction L-glutamyl-tRNA(Gln) + L-glutamine + ATP + H2O = L-glutaminyl-tRNA(Gln) + L-glutamate + ADP + phosphate + H(+). The catalysed reaction is L-aspartyl-tRNA(Asn) + L-glutamine + ATP + H2O = L-asparaginyl-tRNA(Asn) + L-glutamate + ADP + phosphate + 2 H(+). Allows the formation of correctly charged Asn-tRNA(Asn) or Gln-tRNA(Gln) through the transamidation of misacylated Asp-tRNA(Asn) or Glu-tRNA(Gln) in organisms which lack either or both of asparaginyl-tRNA or glutaminyl-tRNA synthetases. The reaction takes place in the presence of glutamine and ATP through an activated phospho-Asp-tRNA(Asn) or phospho-Glu-tRNA(Gln). The sequence is that of Aspartyl/glutamyl-tRNA(Asn/Gln) amidotransferase subunit C from Janthinobacterium sp. (strain Marseille) (Minibacterium massiliensis).